A 374-amino-acid polypeptide reads, in one-letter code: Zinc finger CCCH domain-containing protein 15 homolog (374 aa).

2 consecutive C3H1-type zinc fingers follow at residues 89-116 and 167-197; these read DPKSLLCVFFKQGLCGKGAKCKFSHDLA and YFLEAVENNKYGWFWECPNGGDKCQYRHCLP.

Belongs to the ZC3H15/TMA46 family.

The polypeptide is Zinc finger CCCH domain-containing protein 15 homolog (Caenorhabditis briggsae).